We begin with the raw amino-acid sequence, 5193 residues long: Usherin (5193 aa).

Residues 1-34 (MHYLALSPGFLCYTIKTLILAYLASVLVLAASQG) form the signal peptide. Residues 35–5033 (VFPRLENVGA…KSTEFYSELW (4999 aa)) are Extracellular-facing. Residues Asn230, Asn258, Asn274, Asn358, Asn415, Asn448, and Asn469 are each glycosylated (N-linked (GlcNAc...) asparagine). A Laminin N-terminal domain is found at 268–514 (QDFRLYNVSL…AVDEIIVSGR (247 aa)). 24 cysteine pairs are disulfide-bonded: Cys515–Cys524, Cys517–Cys533, Cys535–Cys546, Cys549–Cys569, Cys572–Cys581, Cys574–Cys602, Cys605–Cys614, Cys617–Cys635, Cys638–Cys652, Cys640–Cys659, Cys661–Cys670, Cys673–Cys688, Cys691–Cys705, Cys693–Cys712, Cys714–Cys723, Cys726–Cys741, Cys744–Cys756, Cys746–Cys763, Cys765–Cys774, Cys777–Cys789, Cys792–Cys805, Cys794–Cys812, Cys814–Cys823, and Cys826–Cys846. 10 Laminin EGF-like domains span residues 515–571 (CQCH…NCKP), 572–637 (CQCH…ACKL), 638–690 (CDCN…GCRP), 691–743 (CNCN…GCEP), 744–791 (CQCN…ACEV), 792–848 (CDCS…NCEK), 853–896 (NGSL…GCQA), 897–947 (CDCD…GCLP), 948–998 (CLCH…RCRP), and 999–1049 (CHCH…GCSK). An N-linked (GlcNAc...) asparagine glycan is attached at Asn647. Residues Asn836 and Asn853 are each glycosylated (N-linked (GlcNAc...) asparagine). Intrachain disulfides connect Cys867-Cys876, Cys879-Cys894, Cys897-Cys910, Cys899-Cys917, Cys919-Cys928, Cys931-Cys945, Cys948-Cys960, Cys950-Cys967, Cys969-Cys979, Cys982-Cys996, Cys999-Cys1011, Cys1001-Cys1018, Cys1020-Cys1029, and Cys1032-Cys1047. N-linked (GlcNAc...) asparagine glycosylation occurs at Asn885. The N-linked (GlcNAc...) asparagine glycan is linked to Asn941. The N-linked (GlcNAc...) asparagine glycan is linked to Asn1008. 5 consecutive Fibronectin type-III domains span residues 1055–1143 (PPPR…TKPE), 1147–1241 (GHLN…APPQ), 1242–1357 (TQGP…SVPV), 1358–1462 (FMAP…AAPA), and 1463–1566 (QLRP…LQLK). N-linked (GlcNAc...) asparagine glycosylation is found at Asn1068, Asn1089, Asn1150, Asn1171, and Asn1222. N-linked (GlcNAc...) asparagine glycosylation is found at Asn1382, Asn1473, and Asn1626. 2 Laminin G-like domains span residues 1511–1700 (TKGT…WEGC) and 1705–1882 (EEGV…QDGC). Cys1663 and Cys1700 are joined by a disulfide. Asn1770 carries an N-linked (GlcNAc...) asparagine glycan. Fibronectin type-III domains lie at 1847-1946 (EPGF…TAPQ), 1948-2045 (VPTP…TPQE), 2046-2132 (APQE…TAQL), 2133-2234 (PPEQ…IPEG), 2235-2321 (VPAP…APPE), 2322-2421 (GVVN…SVEM), 2422-2525 (PPGA…DKPG), 2526-2613 (PIDA…TLPG), 2617-2713 (GIPS…TRPC), 2717-2810 (GVQP…THPA), 2811-2914 (PPQE…TLAG), 2918-3009 (RGAT…MWEE), and 3013-3103 (GMLP…TPSD). A disulfide bridge connects residues Cys1853 and Cys1882. N-linked (GlcNAc...) asparagine glycosylation is present at Asn1894. Positions 1931 to 1955 (VSSDWSRGRTLGTAPQSVPTPSRAQ) are disordered. Residues 1943 to 1955 (TAPQSVPTPSRAQ) show a composition bias toward polar residues. Residues Asn1958, Asn2095, Asn2121, Asn2177, Asn2186, Asn2249, Asn2276, Asn2313, Asn2368, and Asn2404 are each glycosylated (N-linked (GlcNAc...) asparagine). Asn2575, Asn2647, Asn2701, Asn2761, and Asn2779 each carry an N-linked (GlcNAc...) asparagine glycan. Asn2928, Asn2998, Asn3023, Asn3090, Asn3208, Asn3322, and Asn3411 each carry an N-linked (GlcNAc...) asparagine glycan. Fibronectin type-III domains are found at residues 3395 to 3489 (CPAT…TRED), 3490 to 3580 (VPEG…TTQR), 3581 to 3671 (SPEN…TLQA), 3672 to 3766 (APQG…TPED), 3769 to 3857 (PPCN…TLEA), 3858 to 3955 (APVG…TLEA), 3956 to 4059 (PPRG…SAPS), 4060 to 4148 (GLMN…APPD), 4149 to 4256 (TQMA…APPD), 4257 to 4346 (GLSP…TPEV), 4347 to 4437 (PPSE…APPE), 4438 to 4522 (NMDP…TSPS), 4523 to 4625 (APSG…VPPL), 4628 to 4725 (PAPH…TGPA), 4726 to 4818 (PPEG…THPA), 4819 to 4921 (PPSG…TKKE), and 4922 to 5005 (MPQY…YDAA). N-linked (GlcNAc...) asparagine glycosylation is found at Asn3589, Asn3645, Asn3686, Asn3712, Asn3723, and Asn3772. Residues Asn3976, Asn4063, Asn4194, Asn4218, Asn4304, Asn4340, Asn4365, and Asn4410 are each glycosylated (N-linked (GlcNAc...) asparagine). N-linked (GlcNAc...) asparagine glycans are attached at residues Asn4556, Asn4575, Asn4683, Asn4716, Asn4746, Asn4756, Asn4765, Asn4915, and Asn4934. A helical membrane pass occupies residues 5034-5054 (FIMVMAVVGLILLAIFLSLIL). The Cytoplasmic segment spans residues 5055 to 5193 (QRKIHKEPCI…EHTAFTDTHL (139 aa)). Residues 5191–5193 (THL) carry the PDZ-binding motif.

As to quaternary structure, interacts with collagen IV and fibronectin via its laminin EGF-like domains. Interaction with collagen may be required for stable integration into the basement membrane. Interacts with NINL. Interacts with USH1C. Component of USH2 complex, composed of ADGRV1, PDZD7, USH2A and WHRN. Interacts with ADGRV1/MASS1 (via N-terminal PDZ domain). Interacts (via the cytoplasmic region) with WHRN. Interacts (via the cytoplasmic region) with PDZD7. Interacts (via the cytoplasmic region) with VEZT and MYO7A (via MyTH4-FERM domains); the interaction associates VEZT with the USH2 complex at the stereocilia base. In terms of tissue distribution, present in the testis, epididymis, oviduct, spleen, submaxillary gland, and small and large intestines. Not detected in the brain, skin, lung, skeletal muscle, cardiac muscle, liver or kidney. Expressed in smooth muscle of the colon and the epididymis. Also present in select vascular basement membranes. In the cochlea, it is present in virtually every basement membrane. It is particularly high in the strial capillary basement membranes (SCBMs). In the retina, it is again expressed in all of the basement membranes. It is also very prevalent in the lens capsule and the Bruch's layer between the retinal pigment epithelium and the choroid layer, which is very rich in basement membranes. In neonates in it is widely expressed in the basement membranes of the cochlea. Present in the synaptic terminals of retinal photoreceptors (at protein level).

The protein resides in the cell projection. It is found in the stereocilium membrane. Its subcellular location is the photoreceptor inner segment. It localises to the secreted. In terms of biological role, involved in hearing and vision as member of the USH2 complex. In the inner ear, required for the maintenance of hair bundle ankle formation, which connects growing stereocilia in developing cochlear hair cells. In retina photoreceptors, the USH2 complex is required for the maintenance of periciliary membrane complex that seems to play a role in regulating intracellular protein transport. The sequence is that of Usherin (Ush2A) from Mus musculus (Mouse).